The following is a 160-amino-acid chain: MSDLCPVYAPFFGSIGCAAAIVFTCFGASYGTAKSGVGICATSVTRPDLLVKNVVPVVMAGIIAIYGLVVSVLVSDSLSQKQALYTGFIQLGAGLSVGLSGLAAGFAIGIVGDAGVRGTAQQPRLFVGMILILIFAEVLGLYGLIVALLLNSRASQDVTC.

The Lumenal portion of the chain corresponds to Met-1–Pro-6. The helical transmembrane segment at Val-7 to Gly-27 threads the bilayer. Over Ala-28–Asn-53 the chain is Cytoplasmic. A helical transmembrane segment spans residues Val-54–Val-74. Over Ser-75 to Gln-90 the chain is Lumenal. A helical membrane pass occupies residues Leu-91–Val-111. Over Gly-112–Met-129 the chain is Cytoplasmic. The chain crosses the membrane as a helical span at residues Ile-130–Leu-150. Residues Asn-151–Cys-160 lie on the Lumenal side of the membrane.

Belongs to the V-ATPase proteolipid subunit family. As to quaternary structure, V-ATPase is a heteromultimeric enzyme composed of a peripheral catalytic V1 complex (components A to H) attached to an integral membrane V0 proton pore complex (components: a, c, c', c'', d, e, f and VOA1). The decameric c-ring forms the proton-conducting pore, and is composed of eight proteolipid subunits c, one subunit c' and one subunit c''.

The protein localises to the vacuole membrane. Its function is as follows. Proton-conducting pore forming subunit of the V0 complex of vacuolar(H+)-ATPase (V-ATPase), a multisubunit enzyme composed of a peripheral complex (V1) that hydrolyzes ATP and a membrane integral complex (V0) that translocates protons. V-ATPase is responsible for acidifying and maintaining the pH of intracellular compartments. This is V-type proton ATPase subunit c (VMA3) from Candida tropicalis (Yeast).